The chain runs to 78 residues: MEFKQEVLDVLAEVCQEDAVKENPDIEIFEEGLLDSFGTVELLVAIENRFGITVPITEFDRDEWNTPNNIVNKLTELK.

One can recognise a Carrier domain in the interval 1–78; that stretch reads MEFKQEVLDV…NIVNKLTELK (78 aa). At Ser36 the chain carries O-(pantetheine 4'-phosphoryl)serine.

This sequence belongs to the DltC family. Post-translationally, 4'-phosphopantetheine is transferred from CoA to a specific serine of apo-DCP.

Its subcellular location is the cytoplasm. The protein operates within cell wall biogenesis; lipoteichoic acid biosynthesis. In terms of biological role, carrier protein involved in the D-alanylation of lipoteichoic acid (LTA). The loading of thioester-linked D-alanine onto DltC is catalyzed by D-alanine--D-alanyl carrier protein ligase DltA. The DltC-carried D-alanyl group is further transferred to cell membrane phosphatidylglycerol (PG) by forming an ester bond, probably catalyzed by DltD. D-alanylation of LTA plays an important role in modulating the properties of the cell wall in Gram-positive bacteria, influencing the net charge of the cell wall. In Bacillus velezensis (strain DSM 23117 / BGSC 10A6 / LMG 26770 / FZB42) (Bacillus amyloliquefaciens subsp. plantarum), this protein is D-alanyl carrier protein.